The sequence spans 296 residues: Glycine--tRNA ligase alpha subunit (296 aa).

The protein belongs to the class-II aminoacyl-tRNA synthetase family. Tetramer of two alpha and two beta subunits.

It is found in the cytoplasm. It carries out the reaction tRNA(Gly) + glycine + ATP = glycyl-tRNA(Gly) + AMP + diphosphate. The protein is Glycine--tRNA ligase alpha subunit of Prochlorococcus marinus (strain SARG / CCMP1375 / SS120).